The following is a 687-amino-acid chain: Protein SDA1 homolog (687 aa).

Disordered regions lie at residues 517-549 (SSDEEQEDEDPSGENQEGEEDGQTRAARISQMR), 561-587 (MKQLTKEVQPKLGKKRKRATTTEEPQG), and 615-687 (TVIA…KSKI). Residues 520-537 (EEQEDEDPSGENQEGEED) are compositionally biased toward acidic residues. Basic residues predominate over residues 644–666 (EKRRKKNFMMMRHNKLVRGKTKR). Positions 667 to 680 (SFRDKQIALRDSLL) are enriched in basic and acidic residues.

It belongs to the SDA1 family.

It is found in the nucleus. Its subcellular location is the nucleolus. In terms of biological role, required for 60S pre-ribosomal subunits export to the cytoplasm. This is Protein SDA1 homolog (sdad1) from Nematostella vectensis (Starlet sea anemone).